The chain runs to 90 residues: Small ribosomal subunit protein uS15c (90 aa).

The protein belongs to the universal ribosomal protein uS15 family. As to quaternary structure, part of the 30S ribosomal subunit.

It is found in the plastid. It localises to the chloroplast. This is Small ribosomal subunit protein uS15c (rps15-A) from Zea mays (Maize).